A 91-amino-acid chain; its full sequence is Non-structural protein 3a (91 aa).

Residues 1–19 (MVSFNATAILLLLLANAFS) form the signal peptide.

The protein is Non-structural protein 3a of Tylonycteris pachypus (Lesser bamboo bat).